The primary structure comprises 576 residues: Glutamine--tRNA ligase (576 aa).

The short motif at 47 to 57 is the 'HIGH' region element; sequence PEPNGYLHIGH. ATP contacts are provided by residues 48–50 and 54–60; these read EPN and HIGHAKS. The L-glutamine site is built by aspartate 80 and tyrosine 229. ATP is bound by residues threonine 248 and 283–284; that span reads RL. Residues 290–294 carry the 'KMSKS' region motif; sequence ITSKR.

This sequence belongs to the class-I aminoacyl-tRNA synthetase family. As to quaternary structure, monomer.

The protein localises to the cytoplasm. It catalyses the reaction tRNA(Gln) + L-glutamine + ATP = L-glutaminyl-tRNA(Gln) + AMP + diphosphate. This is Glutamine--tRNA ligase from Ralstonia pickettii (strain 12J).